The primary structure comprises 396 residues: NADH-quinone oxidoreductase subunit D (396 aa).

Belongs to the complex I 49 kDa subunit family. NDH-1 is composed of 14 different subunits. Subunits NuoB, C, D, E, F, and G constitute the peripheral sector of the complex.

The protein localises to the cell inner membrane. It catalyses the reaction a quinone + NADH + 5 H(+)(in) = a quinol + NAD(+) + 4 H(+)(out). Its function is as follows. NDH-1 shuttles electrons from NADH, via FMN and iron-sulfur (Fe-S) centers, to quinones in the respiratory chain. The immediate electron acceptor for the enzyme in this species is believed to be ubiquinone. Couples the redox reaction to proton translocation (for every two electrons transferred, four hydrogen ions are translocated across the cytoplasmic membrane), and thus conserves the redox energy in a proton gradient. The polypeptide is NADH-quinone oxidoreductase subunit D (Methylorubrum extorquens (strain PA1) (Methylobacterium extorquens)).